The sequence spans 67 residues: uncharacterized protein (67 aa).

This is an uncharacterized protein from Bacillus subtilis (strain 168).